The primary structure comprises 382 residues: Kelch domain-containing protein 3 (382 aa).

Kelch repeat units lie at residues 25 to 77 (RVYS…PYMR), 88 to 138 (TVLL…VLGK), 139 to 189 (IMYI…TMLG), 191 to 249 (HMYV…GYNG), and 251 to 301 (LYIF…IVGD).

As to quaternary structure, component of a CRL2(KLHDC3) complex, also named ECS(KLHDC3) complex, composed of CUL2, Elongin BC (ELOB and ELOC), RBX1 and substrate-specific adapter KLHDC3. May form oligomers as a KLHDC3-ELOB-ELOC complex; this interaction is likely autoinhibitory for the E3 ligase complex.

It is found in the cytoplasm. The protein operates within protein modification; protein ubiquitination. Functionally, substrate-recognition component of a Cul2-RING (CRL2) E3 ubiquitin-protein ligase complex of the DesCEND (destruction via C-end degrons) pathway, which recognizes a C-degron located at the extreme C terminus of target proteins, leading to their ubiquitination and degradation. The C-degron recognized by the DesCEND pathway is usually a motif of less than ten residues and can be present in full-length proteins, truncated proteins or proteolytically cleaved forms. The CRL2(KLHDC3) complex specifically recognizes proteins with a glycine (Gly) at the C-terminus, leading to their ubiquitination and degradation: recognizes the C-terminal -Arg-(Xaa)n-Arg-Gly, -Arg-(Xaa)n-Lys-Gly, and -Arg-(Xaa)n-Gln-Gly degrons. The CRL2(KLHDC3) complex mediates ubiquitination and degradation of truncated SELENOV and SEPHS2 selenoproteins produced by failed UGA/Sec decoding, which end with a glycine. May be involved in meiotic recombination process. The protein is Kelch domain-containing protein 3 of Homo sapiens (Human).